The chain runs to 279 residues: 3-methyl-2-oxobutanoate hydroxymethyltransferase (279 aa).

Residues Asp43 and Asp82 each coordinate Mg(2+). Residues 43-44 (DS), Asp82, and Lys112 each bind 3-methyl-2-oxobutanoate. Residue Glu114 coordinates Mg(2+). Glu181 serves as the catalytic Proton acceptor.

Belongs to the PanB family. In terms of assembly, homodecamer; pentamer of dimers. Requires Mg(2+) as cofactor.

The protein resides in the cytoplasm. The catalysed reaction is 3-methyl-2-oxobutanoate + (6R)-5,10-methylene-5,6,7,8-tetrahydrofolate + H2O = 2-dehydropantoate + (6S)-5,6,7,8-tetrahydrofolate. It participates in cofactor biosynthesis; (R)-pantothenate biosynthesis; (R)-pantoate from 3-methyl-2-oxobutanoate: step 1/2. Functionally, catalyzes the reversible reaction in which hydroxymethyl group from 5,10-methylenetetrahydrofolate is transferred onto alpha-ketoisovalerate to form ketopantoate. This chain is 3-methyl-2-oxobutanoate hydroxymethyltransferase, found in Exiguobacterium sibiricum (strain DSM 17290 / CCUG 55495 / CIP 109462 / JCM 13490 / 255-15).